We begin with the raw amino-acid sequence, 547 residues long: Glucose-6-phosphate isomerase (547 aa).

The active-site Proton donor is Glu-355. Residues His-386 and Lys-512 contribute to the active site.

Belongs to the GPI family.

It is found in the cytoplasm. It carries out the reaction alpha-D-glucose 6-phosphate = beta-D-fructose 6-phosphate. The protein operates within carbohydrate biosynthesis; gluconeogenesis. It functions in the pathway carbohydrate degradation; glycolysis; D-glyceraldehyde 3-phosphate and glycerone phosphate from D-glucose: step 2/4. Functionally, catalyzes the reversible isomerization of glucose-6-phosphate to fructose-6-phosphate. The polypeptide is Glucose-6-phosphate isomerase (Corynebacterium diphtheriae (strain ATCC 700971 / NCTC 13129 / Biotype gravis)).